The chain runs to 256 residues: MLWVVLAVVVVLASVLVLLRQSSGLLALLWHDVVHQRLLNFFTGLSRPQRILKAVQKNATKGNPESVIAAIDHYCRHSEWAMNVGDEKGLILDSVVTEVNPSTALELGTYCGYSTVRIARLLSPGTKLITLEFNPDYAAIARQIIAYAGLQDKVILVEGPSGDLIPKMKQQHGIKSFDFVFLDHWKDRYVPDTKLLEECGLLRKGSVLLADNVICPGTPEYLKYVRNDPRYESRYFKSNLEYTKVEDGLEKSVFLG.

A signal peptide spans 1–27; the sequence is MLWVVLAVVVVLASVLVLLRQSSGLLA. An N-linked (GlcNAc...) asparagine glycan is attached at asparagine 58. S-adenosyl-L-methionine contacts are provided by valine 84, serine 114, glutamate 132, and aspartate 183. Mg(2+) is bound at residue aspartate 183. Position 186 (lysine 186) interacts with substrate. Positions 211 and 212 each coordinate Mg(2+). The substrate site is built by asparagine 212 and glutamate 241.

Belongs to the class I-like SAM-binding methyltransferase superfamily. Cation-dependent O-methyltransferase family. The cofactor is Mg(2+). In terms of tissue distribution, widely expressed. Has higher expression in females compared to males. Strongly expressed in liver and diencephalon. Expressed at lower levels in hindbrain, spinal cord, eye, telencephalon, spleen, gut, gill and muscle. Detected in ovary and testis. In eye, detected in all layers of the retina with highest expression in the inner nuclear layer. In gut, expressed in the lamina propria but has little or no expression in gut epithelium. In brain, has strongest expression near the midline of the telencephalon, in the periventricular gray zone of the optic tectum, in the preglomerular nucleus, and near the walls of the diencephalic ventricle.

Its subcellular location is the secreted. It carries out the reaction a catechol + S-adenosyl-L-methionine = a guaiacol + S-adenosyl-L-homocysteine + H(+). In terms of biological role, catalyzes the O-methylation, and thereby the inactivation, of catecholamine neurotransmitters and catechol hormones. Shows highest activity towards catecholestrogens and dobutamine. Also has lower activity towards L-DOPA, dopamine and epinephrine. Active towards the xenobiotic compounds methyl-DOPA, carbidopa, isoproterenol, and apomorphine. The chain is Catechol O-methyltransferase A from Danio rerio (Zebrafish).